The following is a 762-amino-acid chain: Subtilisin-like protease SBT3.11 (762 aa).

A signal peptide spans 1–16 (MMSSIVSWWFFWVISA). Residues 17 to 116 (VCILKVEFNI…VTPNTFYELQ (100 aa)) constitute a propeptide, activation peptide. The region spanning 37–115 (VHIVYLGEKE…QVTPNTFYEL (79 aa)) is the Inhibitor I9 domain. The region spanning 120–609 (TFDYLGLSHS…GGLVNPNKAA (490 aa)) is the Peptidase S8 domain. The active-site Charge relay system is the D150. Residue N206 is glycosylated (N-linked (GlcNAc...) asparagine). H226 serves as the catalytic Charge relay system. N-linked (GlcNAc...) asparagine glycans are attached at residues N241 and N371. The active-site Charge relay system is S540.

The protein belongs to the peptidase S8 family.

The protein resides in the secreted. The protein is Subtilisin-like protease SBT3.11 of Arabidopsis thaliana (Mouse-ear cress).